The primary structure comprises 239 residues: 1-(5-phosphoribosyl)-5-[(5-phosphoribosylamino)methylideneamino] imidazole-4-carboxamide isomerase (239 aa).

Residue aspartate 12 is the Proton acceptor of the active site. The active-site Proton donor is aspartate 133.

Belongs to the HisA/HisF family.

Its subcellular location is the cytoplasm. It catalyses the reaction 1-(5-phospho-beta-D-ribosyl)-5-[(5-phospho-beta-D-ribosylamino)methylideneamino]imidazole-4-carboxamide = 5-[(5-phospho-1-deoxy-D-ribulos-1-ylimino)methylamino]-1-(5-phospho-beta-D-ribosyl)imidazole-4-carboxamide. It participates in amino-acid biosynthesis; L-histidine biosynthesis; L-histidine from 5-phospho-alpha-D-ribose 1-diphosphate: step 4/9. The sequence is that of 1-(5-phosphoribosyl)-5-[(5-phosphoribosylamino)methylideneamino] imidazole-4-carboxamide isomerase from Sulfurihydrogenibium sp. (strain YO3AOP1).